A 529-amino-acid polypeptide reads, in one-letter code: Probable E3 ubiquitin-protein ligase MGRN1 (529 aa).

An RING-type zinc finger spans residues 275-314; that stretch reads ECVVCLSDLRDTLILPCRHLCLCNACADTLRYQANNCPIC. Disordered stretches follow at residues 341 to 362 and 396 to 529; these read SPVLSQSSDHTEHSNADNIPPG and EMGD…VEEC. Composition is skewed to polar residues over residues 449 to 463 and 477 to 487; these read AQPQSVLPCSLSPSE and NSGSESRSLGV. The segment covering 501 to 511 has biased composition (low complexity); that stretch reads SSLSQSESDPS. Over residues 520–529 the composition is skewed to polar residues; that stretch reads ESWSTAVEEC.

In terms of processing, autoubiquitinated in vitro.

The catalysed reaction is S-ubiquitinyl-[E2 ubiquitin-conjugating enzyme]-L-cysteine + [acceptor protein]-L-lysine = [E2 ubiquitin-conjugating enzyme]-L-cysteine + N(6)-ubiquitinyl-[acceptor protein]-L-lysine.. The protein operates within protein modification; protein ubiquitination. Its function is as follows. E3 ubiquitin-protein ligase. Also acts as a negative regulator of hedgehog signaling. This is Probable E3 ubiquitin-protein ligase MGRN1 (mgrn1) from Danio rerio (Zebrafish).